The following is a 118-amino-acid chain: uncharacterized protein (118 aa).

An N-terminal signal peptide occupies residues 1 to 22 (MKMSYLRSGIVGFLAGASLSYA). Residues 41-71 (TATEALETDKQLYKKIEKKIEELESSCVKKS) adopt a coiled-coil conformation.

This is an uncharacterized protein from Schizosaccharomyces pombe (strain 972 / ATCC 24843) (Fission yeast).